We begin with the raw amino-acid sequence, 286 residues long: Probable endonuclease 4 (286 aa).

Positions 67, 107, 146, 180, 183, 217, 230, 232, and 262 each coordinate Zn(2+).

Belongs to the AP endonuclease 2 family. Zn(2+) is required as a cofactor.

The enzyme catalyses Endonucleolytic cleavage to 5'-phosphooligonucleotide end-products.. In terms of biological role, endonuclease IV plays a role in DNA repair. It cleaves phosphodiester bonds at apurinic or apyrimidinic (AP) sites, generating a 3'-hydroxyl group and a 5'-terminal sugar phosphate. The chain is Probable endonuclease 4 from Methanosphaerula palustris (strain ATCC BAA-1556 / DSM 19958 / E1-9c).